A 314-amino-acid chain; its full sequence is 4-hydroxy-3-methylbut-2-enyl diphosphate reductase (314 aa).

Cys-12 is a [4Fe-4S] cluster binding site. The (2E)-4-hydroxy-3-methylbut-2-enyl diphosphate site is built by His-41 and His-74. Residues His-41 and His-74 each contribute to the dimethylallyl diphosphate site. Isopentenyl diphosphate-binding residues include His-41 and His-74. A [4Fe-4S] cluster-binding site is contributed by Cys-96. A (2E)-4-hydroxy-3-methylbut-2-enyl diphosphate-binding site is contributed by His-124. Dimethylallyl diphosphate is bound at residue His-124. His-124 provides a ligand contact to isopentenyl diphosphate. Glu-126 functions as the Proton donor in the catalytic mechanism. Position 167 (Thr-167) interacts with (2E)-4-hydroxy-3-methylbut-2-enyl diphosphate. Cys-197 contacts [4Fe-4S] cluster. Ser-225, Ser-226, Asn-227, and Ser-269 together coordinate (2E)-4-hydroxy-3-methylbut-2-enyl diphosphate. 4 residues coordinate dimethylallyl diphosphate: Ser-225, Ser-226, Asn-227, and Ser-269. Residues Ser-225, Ser-226, Asn-227, and Ser-269 each contribute to the isopentenyl diphosphate site.

This sequence belongs to the IspH family. It depends on [4Fe-4S] cluster as a cofactor.

The catalysed reaction is isopentenyl diphosphate + 2 oxidized [2Fe-2S]-[ferredoxin] + H2O = (2E)-4-hydroxy-3-methylbut-2-enyl diphosphate + 2 reduced [2Fe-2S]-[ferredoxin] + 2 H(+). It carries out the reaction dimethylallyl diphosphate + 2 oxidized [2Fe-2S]-[ferredoxin] + H2O = (2E)-4-hydroxy-3-methylbut-2-enyl diphosphate + 2 reduced [2Fe-2S]-[ferredoxin] + 2 H(+). It participates in isoprenoid biosynthesis; dimethylallyl diphosphate biosynthesis; dimethylallyl diphosphate from (2E)-4-hydroxy-3-methylbutenyl diphosphate: step 1/1. The protein operates within isoprenoid biosynthesis; isopentenyl diphosphate biosynthesis via DXP pathway; isopentenyl diphosphate from 1-deoxy-D-xylulose 5-phosphate: step 6/6. In terms of biological role, catalyzes the conversion of 1-hydroxy-2-methyl-2-(E)-butenyl 4-diphosphate (HMBPP) into a mixture of isopentenyl diphosphate (IPP) and dimethylallyl diphosphate (DMAPP). Acts in the terminal step of the DOXP/MEP pathway for isoprenoid precursor biosynthesis. In Mannheimia succiniciproducens (strain KCTC 0769BP / MBEL55E), this protein is 4-hydroxy-3-methylbut-2-enyl diphosphate reductase.